Consider the following 132-residue polypeptide: Large ribosomal subunit protein bL19 (132 aa).

This sequence belongs to the bacterial ribosomal protein bL19 family.

In terms of biological role, this protein is located at the 30S-50S ribosomal subunit interface and may play a role in the structure and function of the aminoacyl-tRNA binding site. The protein is Large ribosomal subunit protein bL19 of Rhodospirillum centenum (strain ATCC 51521 / SW).